The sequence spans 256 residues: MEIIPAIDLLNGKCVRLNQGNYNEVTKFNSDPVKQAEIWESKGAKRLHLVDLDGAKTGEPINDLTIKEIKKSITIPIQLGGGIRSIDRAKELFDIGIDRIILGTIAIEKPELVKDLSKEYPKRIAVGIDAKEGMVATRGWLKQSEISSLDLAKQLNDLDLAAIISTDIATDGTLKGPNVQALREIAEISINPVIASGGIGSIADLISLADFADEGIEGIIVGRALYDGSIDLKEAILTLKNLLLQDAFNEKDKFLV.

Asp-8 serves as the catalytic Proton acceptor. Asp-129 acts as the Proton donor in catalysis.

This sequence belongs to the HisA/HisF family.

The protein localises to the cytoplasm. The enzyme catalyses 1-(5-phospho-beta-D-ribosyl)-5-[(5-phospho-beta-D-ribosylamino)methylideneamino]imidazole-4-carboxamide = 5-[(5-phospho-1-deoxy-D-ribulos-1-ylimino)methylamino]-1-(5-phospho-beta-D-ribosyl)imidazole-4-carboxamide. The protein operates within amino-acid biosynthesis; L-histidine biosynthesis; L-histidine from 5-phospho-alpha-D-ribose 1-diphosphate: step 4/9. The sequence is that of 1-(5-phosphoribosyl)-5-[(5-phosphoribosylamino)methylideneamino] imidazole-4-carboxamide isomerase from Prochlorococcus marinus (strain NATL2A).